We begin with the raw amino-acid sequence, 157 residues long: Ribosome-binding factor A (157 aa).

A disordered region spans residues 126–157; it reads RARATAQYAGDADPYKHDDEPSDDFEDDSDEE. Residues 145 to 157 are compositionally biased toward acidic residues; sequence EPSDDFEDDSDEE.

Belongs to the RbfA family. In terms of assembly, monomer. Binds 30S ribosomal subunits, but not 50S ribosomal subunits or 70S ribosomes.

The protein resides in the cytoplasm. In terms of biological role, one of several proteins that assist in the late maturation steps of the functional core of the 30S ribosomal subunit. Associates with free 30S ribosomal subunits (but not with 30S subunits that are part of 70S ribosomes or polysomes). Required for efficient processing of 16S rRNA. May interact with the 5'-terminal helix region of 16S rRNA. This is Ribosome-binding factor A from Bifidobacterium longum (strain DJO10A).